Here is a 427-residue protein sequence, read N- to C-terminus: Glutamate-1-semialdehyde 2,1-aminomutase (427 aa).

An N6-(pyridoxal phosphate)lysine modification is found at lysine 265.

This sequence belongs to the class-III pyridoxal-phosphate-dependent aminotransferase family. HemL subfamily. Homodimer. It depends on pyridoxal 5'-phosphate as a cofactor.

The protein localises to the cytoplasm. It catalyses the reaction (S)-4-amino-5-oxopentanoate = 5-aminolevulinate. It functions in the pathway porphyrin-containing compound metabolism; protoporphyrin-IX biosynthesis; 5-aminolevulinate from L-glutamyl-tRNA(Glu): step 2/2. The protein is Glutamate-1-semialdehyde 2,1-aminomutase of Pseudomonas syringae pv. tomato (strain ATCC BAA-871 / DC3000).